Reading from the N-terminus, the 507-residue chain is Probable aldehyde dehydrogenase (507 aa).

219–225 is a binding site for NAD(+); that stretch reads GFGVEAG. Catalysis depends on residues E263 and C302.

It belongs to the aldehyde dehydrogenase family.

The catalysed reaction is an aldehyde + NAD(+) + H2O = a carboxylate + NADH + 2 H(+). The protein is Probable aldehyde dehydrogenase of Streptomyces coelicolor (strain ATCC BAA-471 / A3(2) / M145).